A 1013-amino-acid chain; its full sequence is MLGAVVVRVTDLNLVSVATPGRVQVWATRLGSGAPVPNVQLSALAVKYDWQDGSRVVSRRTLAPVRTDAQGLATFSLRDGEQLSVRGQVTLGGQPHSAQLGRTENELWTGVAERARALIQTDKPVYRPGETLRGFAVLRRLGAGTRLPYTGPVTVRLRAGYPDATLAQLTVKPDADGLVRFSLPLPQDVKIGGYSLEVELPAAPSASNPNPEPDVSQVPVEVRAFVKPLFTLDLSGPQEVVSGTPLTLSARGELYQGGPANVQAEAFMVDGYASDELYPDYDAGDNGLRYQDLNSDEVYGENAAPGIDPKRRPDQTLTLRGGRATLPLKLQAKNGQPTRYAVALRARDEYGRDVWARRPVTVYPAAIKFVQPRVEGAERRRVSVAVQQVGSGKALAGRRVQAEVVRVFYVTQPDGKSVRREQRISQSVLTSDAAGRVTLNVTLTPGQEGGYVARLSTQDSAGRTARASLDIGSVYKSGAERQAPTLVLSPERSRYQPGDTARLTLNTDLPVGTPLLLSVNAEDRGQVKLIQVTGPTMTLTWPVTAALGPAFSVSAVAVRGGQTAQAFSGELLVPRFDQRLDVQVTAGSEVKPGAEVTFTVRTSRGGQPASALVTLAAVHESVYAVVGDPTPNPWRFLWGATTPQFEIRSSSSQADDGRGGGGGSEAVFYRSDLREVAAFQAVRTDAQGTAKVTVRMPEGLGSYRLSARAFTRTGAAGEARGEQRVGLPFAVRLIRPRVLTAGDTGSVAVSAADRTGQGGNVTLTLGANGQTQTANSPLQGGSATRLFSIKAPQDAQALTLTASAQRGANGERDGLRETVPVRPAGARQLLSGSGSVGADKAGGNASVSLKWPQEAQPESLTLDLAATPLQLALTGLDAALADPADRWVTTDALSARLSSNLDLAALAGPFGWPEVRTRALAQARRDLASLLALRGSDGWGWTEGSPASAEMTARALDALVQAKGAGLTDAVTLQVVRQQAELLLKKSPNSPVLAAGWRGLGPPLRPCDWPAPG.

The segment at 804–844 (AQRGANGERDGLRETVPVRPAGARQLLSGSGSVGADKAGGN) is disordered.

This sequence belongs to the protease inhibitor I39 (alpha-2-macroglobulin) family. Bacterial alpha-2-macroglobulin subfamily.

This Deinococcus radiodurans (strain ATCC 13939 / DSM 20539 / JCM 16871 / CCUG 27074 / LMG 4051 / NBRC 15346 / NCIMB 9279 / VKM B-1422 / R1) protein is Alpha-2-macroglobulin homolog.